We begin with the raw amino-acid sequence, 323 residues long: GDP-L-fucose synthase 1 (323 aa).

N-acetylalanine is present on Ala2. Gly23–Gly29 serves as a coordination point for NADP(+). Tyr149 functions as the Proton donor/acceptor in the catalytic mechanism. NADP(+) is bound by residues Lys153, Pro176–Leu179, and His192. 4 residues coordinate substrate: Arg200, Trp215, Arg222, and Asp282.

The protein belongs to the NAD(P)-dependent epimerase/dehydratase family. Fucose synthase subfamily. In terms of assembly, binds and stabilizes MUR1. Homodimer. Highly expressed in roots and flowers, less abundant in leaves, stems and siliques.

It carries out the reaction GDP-beta-L-fucose + NADP(+) = GDP-4-dehydro-alpha-D-rhamnose + NADPH + H(+). The protein operates within nucleotide-sugar biosynthesis; GDP-L-fucose biosynthesis via de novo pathway; GDP-L-fucose from GDP-alpha-D-mannose: step 2/2. In terms of biological role, catalyzes the two-step NADP-dependent conversion of GDP-4-dehydro-6-deoxy-D-mannose to GDP-fucose, involving an epimerase and a reductase reaction. Not involved in the synthesis of GDP-L-galactose from GDP-D-mannose. The polypeptide is GDP-L-fucose synthase 1 (GER1) (Arabidopsis thaliana (Mouse-ear cress)).